A 73-amino-acid polypeptide reads, in one-letter code: Mitofissin (73 aa).

The protein belongs to the ?ATG44? family. In terms of assembly, homooligomer. Found as homooctamer in solution, but binds to membranes either as a monomer, dimer, or tetramer, not as an octamer.

The protein localises to the mitochondrion intermembrane space. The protein resides in the vacuole. Functionally, mitochondrial fission factor that acts directly on lipid membranes to drive mitochondrial fission required for mitophagy. Directly binds to lipid membranes and brings about lipid membrane fragility to facilitate membrane fission and engulfment of mitochondria by the phagophore. The sequence is that of Mitofissin from Saccharomyces cerevisiae (strain ATCC 204508 / S288c) (Baker's yeast).